Here is a 278-residue protein sequence, read N- to C-terminus: Pantothenate synthetase (278 aa).

An ATP-binding site is contributed by 26–33 (MGNLHEGH). Catalysis depends on histidine 33, which acts as the Proton donor. Residue glutamine 57 participates in (R)-pantoate binding. Glutamine 57 contributes to the beta-alanine binding site. 144–147 (GKKD) is a binding site for ATP. Position 150 (glutamine 150) interacts with (R)-pantoate. ATP-binding positions include glycine 173 and 181–184 (LSSR).

Belongs to the pantothenate synthetase family. As to quaternary structure, homodimer.

It is found in the cytoplasm. It carries out the reaction (R)-pantoate + beta-alanine + ATP = (R)-pantothenate + AMP + diphosphate + H(+). Its pathway is cofactor biosynthesis; (R)-pantothenate biosynthesis; (R)-pantothenate from (R)-pantoate and beta-alanine: step 1/1. Functionally, catalyzes the condensation of pantoate with beta-alanine in an ATP-dependent reaction via a pantoyl-adenylate intermediate. The sequence is that of Pantothenate synthetase from Neisseria meningitidis serogroup A / serotype 4A (strain DSM 15465 / Z2491).